A 460-amino-acid polypeptide reads, in one-letter code: Cysteine--tRNA ligase (460 aa).

Residue Cys28 participates in Zn(2+) binding. Positions Met30 to His40 match the 'HIGH' region motif. Positions 209, 234, and 238 each coordinate Zn(2+). Residues Lys266–Ser270 carry the 'KMSKS' region motif. Lys269 contacts ATP.

It belongs to the class-I aminoacyl-tRNA synthetase family. In terms of assembly, monomer. The cofactor is Zn(2+).

The protein localises to the cytoplasm. It carries out the reaction tRNA(Cys) + L-cysteine + ATP = L-cysteinyl-tRNA(Cys) + AMP + diphosphate. This is Cysteine--tRNA ligase from Pseudomonas putida (strain ATCC 47054 / DSM 6125 / CFBP 8728 / NCIMB 11950 / KT2440).